Consider the following 519-residue polypeptide: Protein tweety homolog 1 (519 aa).

Residues 1 to 42 (MTFASFLINFYSVIPRLNFKFHWTNDVFNLEWSSEYFQALAL) lie on the Extracellular side of the membrane. A helical membrane pass occupies residues 43–63 (VACLGAAVSLLLLVTIIIVWI). Topologically, residues 64 to 82 (CQACHKNETTGKTRRRVRR) are cytoplasmic. A helical transmembrane segment spans residues 83-103 (LSTVLFIISVLCFFMLGVCLF). The Extracellular segment spans residues 104–217 (ANEHVNRGMS…VLSLYESERW (114 aa)). Residues Asn-142, Asn-163, and Asn-176 are each glycosylated (N-linked (GlcNAc...) asparagine). The helical transmembrane segment at 218–238 (AFLVILLSITMVVLFTGVVAF) threads the bilayer. Over 239 to 245 (CKQSKKG) the chain is Cytoplasmic. The chain crosses the membrane as a helical span at residues 246-266 (AVVFSAIGFFIFVVVWLLISI). Residues 267–395 (SLPLTIALAD…GTCNQSVAGM (129 aa)) are Extracellular-facing. N-linked (GlcNAc...) asparagine glycans are attached at residues Asn-328, Asn-341, Asn-348, and Asn-389. A helical transmembrane segment spans residues 396–416 (SIYMLSILLLGVFLFILLIVV). The Cytoplasmic portion of the chain corresponds to 417-519 (SKTWNLFSRL…YNNYEDRYNM (103 aa)). Positions 459–485 (YNPRTRDRTEPSTNTTSGTADEPNAPL) are disordered.

It belongs to the tweety family.

The protein resides in the cell membrane. Probable chloride channel. The chain is Protein tweety homolog 1 (ttyh-1) from Caenorhabditis elegans.